Consider the following 98-residue polypeptide: NADH-ubiquinone oxidoreductase chain 4L (98 aa).

The next 3 helical transmembrane spans lie at 1 to 21 (MSLV…GLLM), 29 to 49 (SLLC…LTIL), and 61 to 81 (IILL…LVMV).

Belongs to the complex I subunit 4L family. Core subunit of respiratory chain NADH dehydrogenase (Complex I) which is composed of 45 different subunits.

The protein localises to the mitochondrion inner membrane. The enzyme catalyses a ubiquinone + NADH + 5 H(+)(in) = a ubiquinol + NAD(+) + 4 H(+)(out). Core subunit of the mitochondrial membrane respiratory chain NADH dehydrogenase (Complex I) which catalyzes electron transfer from NADH through the respiratory chain, using ubiquinone as an electron acceptor. Part of the enzyme membrane arm which is embedded in the lipid bilayer and involved in proton translocation. The protein is NADH-ubiquinone oxidoreductase chain 4L (MT-ND4L) of Rangifer tarandus (Reindeer).